The primary structure comprises 320 residues: Probable cell division protein WhiA (320 aa).

The segment at residues 282-315 (TLKELGEMLSPAIGKSGVNHRLRKIDEIATKLQE) is a DNA-binding region (H-T-H motif).

This sequence belongs to the WhiA family.

In terms of biological role, involved in cell division and chromosome segregation. The polypeptide is Probable cell division protein WhiA (Alkaliphilus oremlandii (strain OhILAs) (Clostridium oremlandii (strain OhILAs))).